A 231-amino-acid polypeptide reads, in one-letter code: NADH-ubiquinone oxidoreductase chain 4 (231 aa).

7 helical membrane passes run 1-21 (PIAG…YGII), 34-54 (VFLP…LTCL), 61-80 (SLIA…AIII), 84-106 (WGLS…LFCL), 128-148 (ILPM…ATPP), 156-176 (LLII…LGLS), and 211-231 (LLMI…ELVI).

The protein belongs to the complex I subunit 4 family.

The protein resides in the mitochondrion membrane. It carries out the reaction a ubiquinone + NADH + 5 H(+)(in) = a ubiquinol + NAD(+) + 4 H(+)(out). In terms of biological role, core subunit of the mitochondrial membrane respiratory chain NADH dehydrogenase (Complex I) that is believed to belong to the minimal assembly required for catalysis. Complex I functions in the transfer of electrons from NADH to the respiratory chain. The immediate electron acceptor for the enzyme is believed to be ubiquinone. The polypeptide is NADH-ubiquinone oxidoreductase chain 4 (MT-ND4) (Tropidolaemus wagleri (Wagler's pit viper)).